A 334-amino-acid chain; its full sequence is Glycosylinositol phosphorylceramide mannosyl transferase 1 (334 aa).

The Cytoplasmic portion of the chain corresponds to 1–26; the sequence is MGGGEVSKEMGACSLAYRRGDQKLRK. The chain crosses the membrane as a helical; Signal-anchor for type II membrane protein span at residues 27 to 49; that stretch reads FVTARSTKFLLFCCIAFVLVTIV. The Lumenal segment spans residues 50–334; sequence CRSSRPWVNS…AVDSRNLWFW (285 aa). Asn-58 carries N-linked (GlcNAc...) asparagine glycosylation. Substrate is bound by residues 145 to 150, 166 to 168, Arg-196, and 258 to 262; these read DSLNNR, DDD, and RNCED. Asp-168 serves as a coordination point for Mn(2+). The cysteines at positions 260 and 305 are disulfide-linked. Asp-262 is a catalytic residue. The N-linked (GlcNAc...) asparagine glycan is linked to Asn-271. Substrate contacts are provided by residues 289-302 and 292-302; these read STGI…TEKR and ISSIGGHTEKR.

Belongs to the glycosyltransferase 64 family. Mn(2+) serves as cofactor. Expressed in leaves, roots, stem, and flowers.

The protein resides in the golgi apparatus membrane. The protein operates within protein modification; protein glycosylation. Its pathway is sphingolipid metabolism. In terms of biological role, mannosyl transferase (ManT) required for the biosynthesis of mannose-carrying glycosylinositol phosphorylceramides (GIPCs). Maybe involved in cell-cell adhesion that maintains the integrity of organs by providing mechanical strength and facilitating the movement of metabolites throughout the plant during development. Prevents abscisic acid- (ABA-) mediated effects on development (e.g. cell size, flowering time, senescence). Probably implicated in beta-(1,4)-galactan biosynthesis thus being a cell-wall synthesis-related (CWSR) protein. This is Glycosylinositol phosphorylceramide mannosyl transferase 1 from Arabidopsis thaliana (Mouse-ear cress).